Here is a 293-residue protein sequence, read N- to C-terminus: Exosome complex component RRP4 (293 aa).

The S1 motif domain occupies 79 to 159 (EVGDIVVGRI…SDGAVSLHTR (81 aa)). Phosphoserine is present on serine 124.

Belongs to the RRP4 family. As to quaternary structure, component of the RNA exosome core complex (Exo-9), composed of EXOSC1, EXOSC2, EXOSC3, EXOSC4, EXOSC5, EXOSC6, EXOSC7, EXOSC8 and EXOSC9; within the complex interacts with EXOSC4 and EXOSC7. The catalytically inactive RNA exosome core complex (Exo-9) associates with the catalytic subunit EXOSC10/RRP6. Exo-9 may associate with DIS3 to form the nucleolar exosome complex, or DIS3L to form the cytoplasmic exosome complex. Exo-9 is formed by a hexameric base ring consisting of the heterodimers EXOSC4-EXOSC9, EXOSC5-EXOSC8 and EXOSC6-EXOSC7, and a cap ring consisting of EXOSC1, EXOSC2 and EXOSC3. The RNA exosome complex associates with cofactors C1D/RRP47, MPHOSPH6/MPP6 and MTREX/MTR4. Interacts with GTPBP1. Interacts with ZFP36L1 (via N-terminus).

It localises to the cytoplasm. The protein localises to the nucleus. It is found in the nucleolus. Its function is as follows. Non-catalytic component of the RNA exosome complex which has 3'-&gt;5' exoribonuclease activity and participates in a multitude of cellular RNA processing and degradation events. In the nucleus, the RNA exosome complex is involved in proper maturation of stable RNA species such as rRNA, snRNA and snoRNA, in the elimination of RNA processing by-products and non-coding 'pervasive' transcripts, such as antisense RNA species and promoter-upstream transcripts (PROMPTs), and of mRNAs with processing defects, thereby limiting or excluding their export to the cytoplasm. The RNA exosome may be involved in Ig class switch recombination (CSR) and/or Ig variable region somatic hypermutation (SHM) by targeting AICDA deamination activity to transcribed dsDNA substrates. In the cytoplasm, the RNA exosome complex is involved in general mRNA turnover and specifically degrades inherently unstable mRNAs containing AU-rich elements (AREs) within their 3' untranslated regions, and in RNA surveillance pathways, preventing translation of aberrant mRNAs. It seems to be involved in degradation of histone mRNA. The catalytic inactive RNA exosome core complex of 9 subunits (Exo-9) is proposed to play a pivotal role in the binding and presentation of RNA for ribonucleolysis, and to serve as a scaffold for the association with catalytic subunits and accessory proteins or complexes. EXOSC2 as peripheral part of the Exo-9 complex stabilizes the hexameric ring of RNase PH-domain subunits through contacts with EXOSC4 and EXOSC7. This Homo sapiens (Human) protein is Exosome complex component RRP4.